The sequence spans 458 residues: ATP-dependent protease ATPase subunit HslU (458 aa).

ATP-binding positions include V18, 60–65, D270, E335, and R407; that span reads GVGKTE.

Belongs to the ClpX chaperone family. HslU subfamily. A double ring-shaped homohexamer of HslV is capped on each side by a ring-shaped HslU homohexamer. The assembly of the HslU/HslV complex is dependent on binding of ATP.

It is found in the cytoplasm. Functionally, ATPase subunit of a proteasome-like degradation complex; this subunit has chaperone activity. The binding of ATP and its subsequent hydrolysis by HslU are essential for unfolding of protein substrates subsequently hydrolyzed by HslV. HslU recognizes the N-terminal part of its protein substrates and unfolds these before they are guided to HslV for hydrolysis. The chain is ATP-dependent protease ATPase subunit HslU from Desulfitobacterium hafniense (strain DSM 10664 / DCB-2).